An 89-amino-acid chain; its full sequence is Small ribosomal subunit protein uS15 (89 aa).

Belongs to the universal ribosomal protein uS15 family. In terms of assembly, part of the 30S ribosomal subunit. Forms a bridge to the 50S subunit in the 70S ribosome, contacting the 23S rRNA.

One of the primary rRNA binding proteins, it binds directly to 16S rRNA where it helps nucleate assembly of the platform of the 30S subunit by binding and bridging several RNA helices of the 16S rRNA. Its function is as follows. Forms an intersubunit bridge (bridge B4) with the 23S rRNA of the 50S subunit in the ribosome. In Orientia tsutsugamushi (strain Boryong) (Rickettsia tsutsugamushi), this protein is Small ribosomal subunit protein uS15.